Consider the following 511-residue polypeptide: Tyrosine--tRNA ligase, chloroplastic/mitochondrial (511 aa).

An L-tyrosine-binding site is contributed by Y118. D122 provides a ligand contact to ATP. The 'HIGH' region signature appears at 123–132; that stretch reads PTAESLHLGN. Positions 162, 256, 260, 263, and 282 each coordinate L-tyrosine. The short motif at 318–322 is the 'KMSKS' region element; it reads KFGKS. Residue K321 participates in ATP binding. In terms of domain architecture, S4 RNA-binding spans 444–510; that stretch reads LSIVDLSVSA…GKKNKVVVRI (67 aa).

Belongs to the class-I aminoacyl-tRNA synthetase family.

It is found in the plastid. The protein localises to the chloroplast. The protein resides in the mitochondrion. The catalysed reaction is tRNA(Tyr) + L-tyrosine + ATP = L-tyrosyl-tRNA(Tyr) + AMP + diphosphate + H(+). Its function is as follows. Catalyzes the attachment of tyrosine to tRNA(Tyr) in a two-step reaction: tyrosine is first activated by ATP to form Tyr-AMP and then transferred to the acceptor end of tRNA(Tyr). This chain is Tyrosine--tRNA ligase, chloroplastic/mitochondrial, found in Arabidopsis thaliana (Mouse-ear cress).